Here is a 237-residue protein sequence, read N- to C-terminus: UPF0174 protein YaaW (237 aa).

This sequence belongs to the UPF0174 family.

The protein is UPF0174 protein YaaW (yaaW) of Escherichia coli (strain K12).